The chain runs to 217 residues: Monomethylamine corrinoid protein 2 (217 aa).

In terms of domain architecture, B12-binding N-terminal spans 1-91 (MTNTEIFEKL…ELEKSKVEGE (91 aa)). Positions 93–217 (TGLAITFVAE…AAKVALNIMK (125 aa)) constitute a B12-binding domain. Methylcob(III)alamin is bound at residue His106.

The protein belongs to the methylamine corrinoid protein family. Can form a complex with MtmB.

The protein operates within one-carbon metabolism; methanogenesis from methylamine. Functionally, acts as a methyl group carrier between MtmB and MtbA. The protein is Monomethylamine corrinoid protein 2 (mtmC2) of Methanosarcina acetivorans (strain ATCC 35395 / DSM 2834 / JCM 12185 / C2A).